Here is a 369-residue protein sequence, read N- to C-terminus: Phenylalanine--tRNA ligase alpha subunit (369 aa).

Glu-269 serves as a coordination point for Mg(2+).

This sequence belongs to the class-II aminoacyl-tRNA synthetase family. Phe-tRNA synthetase alpha subunit type 1 subfamily. Tetramer of two alpha and two beta subunits. It depends on Mg(2+) as a cofactor.

It is found in the cytoplasm. It catalyses the reaction tRNA(Phe) + L-phenylalanine + ATP = L-phenylalanyl-tRNA(Phe) + AMP + diphosphate + H(+). The chain is Phenylalanine--tRNA ligase alpha subunit from Brucella melitensis biotype 1 (strain ATCC 23456 / CCUG 17765 / NCTC 10094 / 16M).